The chain runs to 358 residues: Arginine kinase (358 aa).

A Phosphagen kinase N-terminal domain is found at 6 to 88 (SVEELWAKLD…LDAVIKEYHK (83 aa)). A substrate-binding site is contributed by 61-65 (GVGIY). The Phosphagen kinase C-terminal domain maps to 116 to 353 (YIVSTRVRVG…EACLAKEKEL (238 aa)). ATP contacts are provided by residues 119-123 (STRVR) and His182. Substrate is bound at residue Glu222. Residue Arg226 coordinates ATP. A substrate-binding site is contributed by Cys269. ATP-binding positions include 278 to 282 (RASVH) and 306 to 311 (RGIHGE). Glu311 contacts substrate.

Belongs to the ATP:guanido phosphotransferase family. In terms of assembly, monomer.

The catalysed reaction is L-arginine + ATP = N(omega)-phospho-L-arginine + ADP + H(+). The protein is Arginine kinase of Haliotis madaka (Giant abalone).